The chain runs to 262 residues: Malonyl-[acyl-carrier protein] O-methyltransferase (262 aa).

This sequence belongs to the methyltransferase superfamily.

It carries out the reaction malonyl-[ACP] + S-adenosyl-L-methionine = malonyl-[ACP] methyl ester + S-adenosyl-L-homocysteine. It participates in cofactor biosynthesis; biotin biosynthesis. In terms of biological role, converts the free carboxyl group of a malonyl-thioester to its methyl ester by transfer of a methyl group from S-adenosyl-L-methionine (SAM). It allows to synthesize pimeloyl-ACP via the fatty acid synthetic pathway. This Dechloromonas aromatica (strain RCB) protein is Malonyl-[acyl-carrier protein] O-methyltransferase.